We begin with the raw amino-acid sequence, 78 residues long: Large ribosomal subunit protein bL28 (78 aa).

It belongs to the bacterial ribosomal protein bL28 family.

In Methylococcus capsulatus (strain ATCC 33009 / NCIMB 11132 / Bath), this protein is Large ribosomal subunit protein bL28.